We begin with the raw amino-acid sequence, 308 residues long: Putative proline iminopeptidase (308 aa).

Residues 30–290 form the AB hydrolase-1 domain; it reads KPVLYIHGGP…LYVTNNAGHS (261 aa). The Nucleophile role is filled by S105. Residue D261 is part of the active site. H289 serves as the catalytic Proton donor.

The protein belongs to the peptidase S33 family.

Its subcellular location is the cytoplasm. It carries out the reaction Release of N-terminal proline from a peptide.. In terms of biological role, specifically catalyzes the removal of N-terminal proline residues from peptides. This is Putative proline iminopeptidase (pip) from Mycoplasma genitalium (strain ATCC 33530 / DSM 19775 / NCTC 10195 / G37) (Mycoplasmoides genitalium).